A 91-amino-acid chain; its full sequence is Ice-structuring protein 2A7 (91 aa).

A signal peptide spans 1-21; it reads MALSLFTVGQLIFLFWTMRIT. A propeptide spans 22–39 (removed by a dipeptidylpeptidase); sequence EANPDPAAKAVPAAAAPD.

The protein belongs to the type-I AFP family. Detected in blood serum (at protein level).

Its subcellular location is the secreted. In terms of biological role, contributes to protect fish blood from freezing at subzero sea water temperatures. Lowers the blood freezing point. Binds to nascent ice crystals and prevents further growth. This is Ice-structuring protein 2A7 from Pseudopleuronectes americanus (Winter flounder).